A 227-amino-acid chain; its full sequence is MFS-type transporter FVEG_08288 (227 aa).

Residues valine 8 to isoleucine 28 traverse the membrane as a helical segment. N-linked (GlcNAc...) asparagine glycosylation occurs at asparagine 40. A run of 5 helical transmembrane segments spans residues threonine 43 to glycine 63, valine 100 to valine 120, phenylalanine 122 to leucine 142, phenylalanine 164 to methionine 181, and tyrosine 188 to isoleucine 208.

This sequence belongs to the major facilitator superfamily.

Its subcellular location is the membrane. In terms of biological role, MFS-type transporter; part of the Fusarium detoxification of benzoxazolinone cluster 1 (FDB1) involved in the degradation of benzoxazolinones produced by the host plant. Maize, wheat, and rye produce the 2 benzoxazinone phytoanticipins 2,4-dihy-droxy-7-methoxy-1,4-benzoxazin-3-one (DIMBOA) and 2,4-dihydroxy-1,4-benzoxazin-3-one (DIBOA) that, due to their inherent instability once released, spontaneously degrade to the more stable corresponding benzoxazolinones, 6-methoxy-2-benzoxazolinone (MBOA) and 2-benzoxazolinone (BOA), respectively. This Gibberella moniliformis (strain M3125 / FGSC 7600) (Maize ear and stalk rot fungus) protein is MFS-type transporter FVEG_08288.